The chain runs to 360 residues: Photosystem II protein D1 2 (360 aa).

Transmembrane regions (helical) follow at residues 29-46 (YIGW…AATI), 118-133 (HFLI…EWEL), and 142-156 (WIPV…AATA). His-118 provides a ligand contact to chlorophyll a. Tyr-126 contributes to the pheophytin a binding site. [CaMn4O5] cluster contacts are provided by Asp-170 and Glu-189. The helical transmembrane segment at 197–218 (FHMLGVAGVFGGALFAAMHGSL) threads the bilayer. His-198 provides a ligand contact to chlorophyll a. A quinone contacts are provided by residues His-215 and 264–265 (SF). Fe cation is bound at residue His-215. His-272 serves as a coordination point for Fe cation. Residues 274-288 (FLAAWPVVGIWFAAL) form a helical membrane-spanning segment. [CaMn4O5] cluster-binding residues include His-332, Glu-333, Asp-342, and Ala-344. The propeptide occupies 345–360 (SGELAPVAMIAPSIEA).

This sequence belongs to the reaction center PufL/M/PsbA/D family. In terms of assembly, PSII is composed of 1 copy each of membrane proteins PsbA, PsbB, PsbC, PsbD, PsbE, PsbF, PsbH, PsbI, PsbJ, PsbK, PsbL, PsbM, PsbT, PsbX, PsbY, PsbZ, Psb30/Ycf12, peripheral proteins PsbO, CyanoQ (PsbQ), PsbU, PsbV and a large number of cofactors. It forms dimeric complexes. The D1/D2 heterodimer binds P680, chlorophylls that are the primary electron donor of PSII, and subsequent electron acceptors. It shares a non-heme iron and each subunit binds pheophytin, quinone, additional chlorophylls, carotenoids and lipids. D1 provides most of the ligands for the Mn4-Ca-O5 cluster of the oxygen-evolving complex (OEC). There is also a Cl(-1) ion associated with D1 and D2, which is required for oxygen evolution. The PSII complex binds additional chlorophylls, carotenoids and specific lipids. serves as cofactor. In terms of processing, tyr-161 forms a radical intermediate that is referred to as redox-active TyrZ, YZ or Y-Z. Post-translationally, C-terminally processed by CtpA; processing is essential to allow assembly of the oxygen-evolving complex and thus photosynthetic growth.

It localises to the cellular thylakoid membrane. The catalysed reaction is 2 a plastoquinone + 4 hnu + 2 H2O = 2 a plastoquinol + O2. Photosystem II (PSII) is a light-driven water:plastoquinone oxidoreductase that uses light energy to abstract electrons from H(2)O, generating O(2) and a proton gradient subsequently used for ATP formation. It consists of a core antenna complex that captures photons, and an electron transfer chain that converts photonic excitation into a charge separation. The D1/D2 (PsbA/PsbD) reaction center heterodimer binds P680, the primary electron donor of PSII as well as several subsequent electron acceptors. In Synechococcus elongatus, this protein is Photosystem II protein D1 2.